Here is a 337-residue protein sequence, read N- to C-terminus: Protein RETICULATA-RELATED 3, chloroplastic (337 aa).

The N-terminal 59 residues, 1-59 (MAAMAAKLQLSAKSDQSSVRLPRVINLSRDPTTRVSFPRNGSVCSLHTNFSSPHLAKPC), are a transit peptide targeting the chloroplast. The span at 70–89 (NNGGGSGSGGGGGGFGGSGG) shows a compositional bias: gly residues. Positions 70–96 (NNGGGSGSGGGGGGFGGSGGEASEESS) are disordered. 2 consecutive transmembrane segments (helical) span residues 151 to 171 (FVFSTLVVGSILNFVLMYMLA) and 216 to 236 (VFASVGLAAGLVGTAISNGLI).

The protein belongs to the RETICULATA family. Expressed in root meristem, root vasculature, distal region of young leaf primordia, leaf bundle sheath cells, hydathodes and pollen grains.

It localises to the plastid. The protein resides in the chloroplast membrane. May play a role in leaf development. Required for leaf mesophyll cell division in the early stages of leaf organogenesis. This chain is Protein RETICULATA-RELATED 3, chloroplastic, found in Arabidopsis thaliana (Mouse-ear cress).